Reading from the N-terminus, the 1096-residue chain is Phospholipase D zeta 1 (1096 aa).

A2 bears the N-acetylalanine mark. In terms of domain architecture, PX spans 50–204 (PKAVIVSVSR…REVCRFLEVS (155 aa)). Positions 131-152 (VQDEDADEVPLHQDESAKNRDV) are disordered. Positions 139 to 151 (VPLHQDESAKNRD) are enriched in basic and acidic residues. Positions 234 to 342 (DDSNRCCGCC…WVASINDAAL (109 aa)) constitute a PH domain. Residues 477 to 504 (YLWSHHEKLVIVDNQVCFIGGLDLCFGR) enclose the PLD phosphodiesterase 1 domain. Residues H482, K484, and D489 contribute to the active site. A compositionally biased stretch (basic and acidic residues) spans 607-632 (GRQEESDIESKKEEDSIRGIRRDDSF). A disordered region spans residues 607–691 (GRQEESDIES…DGDTPMRGFV (85 aa)). Residues 892-919 (SQVYVHSKIMIVDDRAALIGSANINDRS) form the PLD phosphodiesterase 2 domain. Residues H897, K899, and D904 contribute to the active site.

It belongs to the phospholipase D family. PXPH-PLD subfamily. It depends on Does not require Ca(2+) or any other cation for activity. as a cofactor. Expressed in inflorescences, flowers, siliques, stems, leaves, and roots. Highest expression in roots.

Its subcellular location is the cytoplasmic vesicle. It catalyses the reaction a 1,2-diacyl-sn-glycero-3-phosphocholine + H2O = a 1,2-diacyl-sn-glycero-3-phosphate + choline + H(+). Calcium-independent and PIP2-dependent. Functionally, hydrolyzes glycerol-phospholipids at the terminal phosphodiesteric bond to generate phosphatidic acids (PA). Phosphatidylcholine-selective. Regulates root-hair morphogenesis. Contributes to the supply of inorganic phosphorus for cell metabolism and diacylglycerol moieties for galactolipid synthesis in phosphorus-starved roots. Involved in root elongation during phosphate limitation. This Arabidopsis thaliana (Mouse-ear cress) protein is Phospholipase D zeta 1.